The chain runs to 298 residues: Hydroxymethylglutaryl-CoA lyase, mitochondrial (298 aa).

Residues 6-273 (VKVVEVGPRD…HTGVDLQKLM (268 aa)) form the Pyruvate carboxyltransferase domain. Residue Arg-14 coordinates substrate. Asp-15 contributes to the a divalent metal cation binding site. Residue Lys-21 is modified to N6-acetyllysine. His-206 and His-208 together coordinate a divalent metal cation. The active site involves Cys-239. Asn-248 contributes to the a divalent metal cation binding site. The Microbody targeting signal motif lies at 296–298 (CRL).

Belongs to the HMG-CoA lyase family. As to quaternary structure, homodimer; disulfide-linked. Can also form homotetramers.

It is found in the mitochondrion matrix. The protein localises to the peroxisome. The enzyme catalyses (3S)-3-hydroxy-3-methylglutaryl-CoA = acetoacetate + acetyl-CoA. It participates in metabolic intermediate metabolism; (S)-3-hydroxy-3-methylglutaryl-CoA degradation; acetoacetate from (S)-3-hydroxy-3-methylglutaryl-CoA: step 1/1. Mitochondrial 3-hydroxy-3-methylglutaryl-CoA lyase that catalyzes a cation-dependent cleavage of (S)-3-hydroxy-3-methylglutaryl-CoA into acetyl-CoA and acetoacetate, a key step in ketogenesis. Terminal step in leucine catabolism. Ketone bodies (beta-hydroxybutyrate, acetoacetate and acetone) are essential as an alternative source of energy to glucose, as lipid precursors and as regulators of metabolism. The protein is Hydroxymethylglutaryl-CoA lyase, mitochondrial (HMGCL) of Gallus gallus (Chicken).